The chain runs to 661 residues: Probable potassium transport system protein Kup 1 (661 aa).

Residues 1-11 (MKGLFPAGGGN) show a composition bias toward gly residues. Positions 1–38 (MKGLFPAGGGNPPSSYLSRFLPHRKERSPENVTSGRNG) are disordered. 12 helical membrane-spanning segments follow: residues 48 to 68 (LALG…LYTI), 85 to 105 (IMGV…IKYI), 139 to 159 (AVVV…GFIT), 177 to 197 (AAKN…FLVQ), 207 to 227 (IFGP…LLCI), 251 to 271 (VHGL…EALY), 286 to 306 (WFAM…AALL), 324 to 344 (LLLP…QAMI), 384 to 404 (LMMV…GLAG), 405 to 425 (AYGV…FFVA), 436 to 456 (TAPL…SNLL), and 458 to 478 (FFDG…VMAS).

This sequence belongs to the HAK/KUP transporter (TC 2.A.72) family.

It localises to the cell inner membrane. The catalysed reaction is K(+)(in) + H(+)(in) = K(+)(out) + H(+)(out). Transport of potassium into the cell. Likely operates as a K(+):H(+) symporter. This is Probable potassium transport system protein Kup 1 from Syntrophobacter fumaroxidans (strain DSM 10017 / MPOB).